Reading from the N-terminus, the 183-residue chain is MTKQPEDWLDDVPGDDIEDEDDEIIWVSKSEIKRDAEELKRLGAEIVDLGKNALDKIPLDADLRAAIELAQRIKMEGRRRQLQLIGKMLRQRDVEPIRQALDKLKNRHNQQVVLFHKLENLRDRLIEQGDDAIAEVLNLWPDADRQQLRTLIRNAKKEKEGNKPPKSARQIFQYLRELAENEG.

This sequence belongs to the DarP family.

Its subcellular location is the cytoplasm. In terms of biological role, member of a network of 50S ribosomal subunit biogenesis factors which assembles along the 30S-50S interface, preventing incorrect 23S rRNA structures from forming. Promotes peptidyl transferase center (PTC) maturation. In Escherichia coli O6:H1 (strain CFT073 / ATCC 700928 / UPEC), this protein is Dual-action ribosomal maturation protein DarP.